We begin with the raw amino-acid sequence, 337 residues long: 1-aminocyclopropane-1-carboxylate deaminase (337 aa).

Position 50 is an N6-(pyridoxal phosphate)lysine (Lys50). Ser77 acts as the Nucleophile in catalysis.

The protein belongs to the ACC deaminase/D-cysteine desulfhydrase family. In terms of assembly, homotrimer. Pyridoxal 5'-phosphate serves as cofactor.

The catalysed reaction is 1-aminocyclopropane-1-carboxylate + H2O = 2-oxobutanoate + NH4(+). Its function is as follows. Catalyzes a cyclopropane ring-opening reaction, the irreversible conversion of 1-aminocyclopropane-1-carboxylate (ACC) to ammonia and alpha-ketobutyrate. Allows growth on ACC as a nitrogen source. The protein is 1-aminocyclopropane-1-carboxylate deaminase of Methylobacterium sp. (strain 4-46).